Reading from the N-terminus, the 422-residue chain is Dihydrofolate synthase/folylpolyglutamate synthase (422 aa).

29–31 serves as a coordination point for 7,8-dihydropteroate; the sequence is DLG. Residue 59-62 coordinates ATP; that stretch reads GKGT. Position 83 (Ser83) interacts with Mg(2+). 122 to 125 contacts 7,8-dihydropteroate; the sequence is TYFE. Residue Glu146 coordinates Mg(2+). 153 to 155 provides a ligand contact to 7,8-dihydropteroate; it reads LDA. His173 contributes to the Mg(2+) binding site. Lys188 carries the post-translational modification N6-carboxylysine. Positions 257, 289, and 302 each coordinate ATP.

It belongs to the folylpolyglutamate synthase family. As to quaternary structure, monomer. The cofactor is Mg(2+).

It catalyses the reaction 7,8-dihydropteroate + L-glutamate + ATP = 7,8-dihydrofolate + ADP + phosphate + H(+). The catalysed reaction is (6S)-5,6,7,8-tetrahydrofolyl-(gamma-L-Glu)(n) + L-glutamate + ATP = (6S)-5,6,7,8-tetrahydrofolyl-(gamma-L-Glu)(n+1) + ADP + phosphate + H(+). It carries out the reaction 10-formyltetrahydrofolyl-(gamma-L-Glu)(n) + L-glutamate + ATP = 10-formyltetrahydrofolyl-(gamma-L-Glu)(n+1) + ADP + phosphate + H(+). The enzyme catalyses (6R)-5,10-methylenetetrahydrofolyl-(gamma-L-Glu)(n) + L-glutamate + ATP = (6R)-5,10-methylenetetrahydrofolyl-(gamma-L-Glu)(n+1) + ADP + phosphate + H(+). It participates in cofactor biosynthesis; tetrahydrofolate biosynthesis; 7,8-dihydrofolate from 2-amino-4-hydroxy-6-hydroxymethyl-7,8-dihydropteridine diphosphate and 4-aminobenzoate: step 2/2. It functions in the pathway cofactor biosynthesis; tetrahydrofolylpolyglutamate biosynthesis. Its function is as follows. Functions in two distinct reactions of the de novo folate biosynthetic pathway. Catalyzes the addition of a glutamate residue to dihydropteroate (7,8-dihydropteroate or H2Pte) to form dihydrofolate (7,8-dihydrofolate monoglutamate or H2Pte-Glu). Also catalyzes successive additions of L-glutamate to tetrahydrofolate or 10-formyltetrahydrofolate or 5,10-methylenetetrahydrofolate, leading to folylpolyglutamate derivatives. This Escherichia coli (strain K12) protein is Dihydrofolate synthase/folylpolyglutamate synthase.